A 536-amino-acid chain; its full sequence is MQSYTNRICAVCGDTPAKIHYGVLACFGCKGFFRRAVKDGRNKYVCRFEKNCEVTKFERNACRYCRFRKCLLVGMNPDYVRPDREKSKKGKTVLSKKKSVSRSLSYRLADPSDWTSFLSPSSRKQLSEIGKLAETCSTSTNFDGIGNFSLKSLIADRSLARKTGDSEAMDCSNSPRQLNEQFLGIERIVQCVDYIDRFLVMLEEEHCRKFSVEDKSALISDTMIHLLLFESTSRFVAKGAPGLEDLKLSLAQLPICTTHLTQKIADVFETYLRKPPSIIEYSVLKAYIVLSAESTVLSNSLNESLSLARENLSELLFKVIKHSRNKTSISAANSLSTILHFVYESRNLASRIRQSQQPFFVRDSDPKIPFHKILTDIINPEVSDLLLTTANCRKLSTQMGSSLSSVPPVPPPSDTVPLFHFSPPSLSPCQISAPPPPQQQYTDYSQMPSTSSYPANSSPFQSPYRPNSLSSFPKIPLEMTKSIEEFLRPNGMTTDEMNKPLEKNWADGFRLTPVFNKDIVSQFFPELSNINQHHPF.

The nuclear receptor DNA-binding region spans 6–82 (NRICAVCGDT…VGMNPDYVRP (77 aa)). 2 consecutive NR C4-type zinc fingers follow at residues 9 to 29 (CAVC…CFGC) and 46 to 70 (CRFE…FRKC). In terms of domain architecture, NR LBD spans 155–378 (ADRSLARKTG…PFHKILTDII (224 aa)). The segment at 427-465 (SPCQISAPPPPQQQYTDYSQMPSTSSYPANSSPFQSPYR) is disordered. The segment covering 439–465 (QQYTDYSQMPSTSSYPANSSPFQSPYR) has biased composition (polar residues).

Belongs to the nuclear hormone receptor family.

It localises to the nucleus. Its function is as follows. Orphan nuclear receptor. This Caenorhabditis elegans protein is Nuclear hormone receptor family member nhr-7 (nhr-7).